The following is a 193-amino-acid chain: UPF0314 protein Pden_1914 (193 aa).

4 helical membrane-spanning segments follow: residues 13 to 33 (APYW…LWIG), 62 to 82 (WYTP…WLVA), 148 to 168 (LPVW…TWLI), and 172 to 192 (LALN…WQAA).

The protein belongs to the UPF0314 family.

The protein resides in the cell membrane. This Paracoccus denitrificans (strain Pd 1222) protein is UPF0314 protein Pden_1914.